The chain runs to 378 residues: Heterogeneous nuclear ribonucleoprotein A3 (378 aa).

Met-1 carries the post-translational modification N-acetylmethionine. The span at 1–10 (MEVKPPPGRP) shows a compositional bias: pro residues. Residues 1–34 (MEVKPPPGRPQPDSGRRRRRRGEEGHDPKEPEQL) are disordered. Residue Lys-4 forms a Glycyl lysine isopeptide (Lys-Gly) (interchain with G-Cter in SUMO2) linkage. Ser-14 bears the Phosphoserine mark. The span at 21–34 (RGEEGHDPKEPEQL) shows a compositional bias: basic and acidic residues. The region spanning 35 to 118 (RKLFIGGLSF…RAVSREDSVK (84 aa)) is the RRM 1 domain. Lys-36 participates in a covalent cross-link: Glycyl lysine isopeptide (Lys-Gly) (interchain with G-Cter in SUMO2). Ser-43 carries the phosphoserine modification. Arg-52 bears the Dimethylated arginine; alternate mark. Arg-52 is subject to Omega-N-methylarginine; alternate. An Omega-N-methylarginine modification is found at Arg-76. Residues Ser-112 and Ser-116 each carry the phosphoserine modification. Residue Lys-118 forms a Glycyl lysine isopeptide (Lys-Gly) (interchain with G-Cter in SUMO2) linkage. Residue Thr-124 is modified to Phosphothreonine. In terms of domain architecture, RRM 2 spans 126 to 205 (KKIFVGGIKE…CEVKKALSKQ (80 aa)). N6-acetyllysine; alternate is present on Lys-134. Residue Lys-134 forms a Glycyl lysine isopeptide (Lys-Gly) (interchain with G-Cter in SUMO2); alternate linkage. Glycyl lysine isopeptide (Lys-Gly) (interchain with G-Cter in SUMO2) cross-links involve residues Lys-151 and Lys-182. The tract at residues 204–225 (KQEMQSAGSQRGRGGGSGNFMG) is disordered. An omega-N-methylarginine; alternate mark is found at Arg-214, Arg-216, Arg-226, Arg-239, and Arg-246. Asymmetric dimethylarginine; alternate is present on residues Arg-214, Arg-216, Arg-226, Arg-239, and Arg-246. The segment covering 214–225 (RGRGGGSGNFMG) has biased composition (gly residues). Position 257 is an omega-N-methylarginine (Arg-257). The residue at position 286 (Arg-286) is an Asymmetric dimethylarginine. A disordered region spans residues 336–378 (SGQQQSNYGPMKGGSFGGRSSGSPYGGGYGSGGGSGGYGSRRF). Residues 346–378 (MKGGSFGGRSSGSPYGGGYGSGGGSGGYGSRRF) are compositionally biased toward gly residues. A Phosphoserine modification is found at Ser-350. Position 354 is an omega-N-methylarginine (Arg-354). Ser-358 carries the post-translational modification Phosphoserine. Tyr-360 and Tyr-364 each carry phosphotyrosine. Ser-366 and Ser-370 each carry phosphoserine. Tyr-373 bears the Phosphotyrosine mark. Ser-375 carries the phosphoserine modification.

Identified in the spliceosome C complex.

The protein localises to the nucleus. Plays a role in cytoplasmic trafficking of RNA. Binds to the cis-acting response element, A2RE. May be involved in pre-mRNA splicing. In Homo sapiens (Human), this protein is Heterogeneous nuclear ribonucleoprotein A3 (HNRNPA3).